Here is a 72-residue protein sequence, read N- to C-terminus: Putative snRNP Sm-like protein (72 aa).

Positions 4-72 (RPLDILNDAL…RGDNVVYVSP (69 aa)) constitute a Sm domain.

Belongs to the snRNP Sm proteins family.

This chain is Putative snRNP Sm-like protein, found in Methanococcoides burtonii (strain DSM 6242 / NBRC 107633 / OCM 468 / ACE-M).